The chain runs to 358 residues: Protein-glutamate methylesterase/protein-glutamine glutaminase 1 (358 aa).

Residues 7 to 124 (SVLLVDDSAV…KNFLIDSAAE (118 aa)) form the Response regulatory domain. At Asp58 the chain carries 4-aspartylphosphate. The 189-residue stretch at 170–358 (AQTTERIVAI…QEIHQAILHR (189 aa)) folds into the CheB-type methylesterase domain. Catalysis depends on residues Ser182, His208, and Asp304.

This sequence belongs to the CheB family. Phosphorylated by CheA. Phosphorylation of the N-terminal regulatory domain activates the methylesterase activity.

The protein resides in the cytoplasm. The enzyme catalyses [protein]-L-glutamate 5-O-methyl ester + H2O = L-glutamyl-[protein] + methanol + H(+). The catalysed reaction is L-glutaminyl-[protein] + H2O = L-glutamyl-[protein] + NH4(+). Involved in chemotaxis. Part of a chemotaxis signal transduction system that modulates chemotaxis in response to various stimuli. Catalyzes the demethylation of specific methylglutamate residues introduced into the chemoreceptors (methyl-accepting chemotaxis proteins or MCP) by CheR. Also mediates the irreversible deamidation of specific glutamine residues to glutamic acid. The polypeptide is Protein-glutamate methylesterase/protein-glutamine glutaminase 1 (Pseudomonas savastanoi pv. phaseolicola (strain 1448A / Race 6) (Pseudomonas syringae pv. phaseolicola (strain 1448A / Race 6))).